A 663-amino-acid polypeptide reads, in one-letter code: Probable receptor-like protein kinase At1g49730 (663 aa).

The N-terminal stretch at 1 to 25 is a signal peptide; it reads MVVNSQAFLLALIALLATQLPSLMA. Residues 26 to 254 are Extracellular-facing; it reads ADCPLDFSGS…TNPYHLTMVP (229 aa). 5 N-linked (GlcNAc...) asparagine glycosylation sites follow: Asn-36, Asn-46, Asn-70, Asn-101, and Asn-171. A disordered region spans residues 213 to 243; that stretch reads SFSPVASPEPSPSTVGGISPSNSDSQMTTSR. Over residues 224–243 the composition is skewed to polar residues; that stretch reads PSTVGGISPSNSDSQMTTSR. The helical transmembrane segment at 255-275 threads the bilayer; that stretch reads TIGIVVTAVALTMLVVLVILI. The Cytoplasmic segment spans residues 276–663; it reads RRKNRELDES…PHSPINGFSF (388 aa). In terms of domain architecture, Protein kinase spans 327–609; the sequence is NDFNTVIGQG…ESCDPVHSAF (283 aa). Residues 333-341 and Lys-355 each bind ATP; that span reads IGQGGFGTV. The active-site Proton acceptor is the Asp-451. Positions 631–663 are disordered; that stretch reads RGDSRIFGPSSSTTSRSHYSRSLPHSPINGFSF. Residues 640-652 show a composition bias toward low complexity; that stretch reads SSSTTSRSHYSRS.

The protein belongs to the protein kinase superfamily. Ser/Thr protein kinase family.

Its subcellular location is the cell membrane. The catalysed reaction is L-seryl-[protein] + ATP = O-phospho-L-seryl-[protein] + ADP + H(+). It catalyses the reaction L-threonyl-[protein] + ATP = O-phospho-L-threonyl-[protein] + ADP + H(+). The protein is Probable receptor-like protein kinase At1g49730 of Arabidopsis thaliana (Mouse-ear cress).